The following is a 385-amino-acid chain: Flap endonuclease 1 (385 aa).

Residues 1–105 form an N-domain region; sequence MGIKGLNAII…HELSKRSARR (105 aa). Aspartate 34 serves as a coordination point for Mg(2+). Arginine 47 and arginine 71 together coordinate DNA. Mg(2+)-binding residues include aspartate 87, glutamate 156, glutamate 158, aspartate 177, and aspartate 179. An I-domain region spans residues 120-251; it reads EKLKHERRLV…VTALKLIKEH (132 aa). Glutamate 156 serves as a coordination point for DNA. 2 residues coordinate DNA: glycine 229 and aspartate 231. Residue aspartate 231 coordinates Mg(2+). An interaction with PCNA region spans residues 338–346; it reads VQGRLDGFF. Over residues 356-370 the composition is skewed to low complexity; it reads LAAANAKAKSTKAGK. The disordered stretch occupies residues 356-385; that stretch reads LAAANAKAKSTKAGKQATKGKVGKPGRPRK. Residues 376 to 385 are compositionally biased toward basic residues; the sequence is KVGKPGRPRK.

The protein belongs to the XPG/RAD2 endonuclease family. FEN1 subfamily. Interacts with PCNA. Three molecules of FEN1 bind to one PCNA trimer with each molecule binding to one PCNA monomer. PCNA stimulates the nuclease activity without altering cleavage specificity. Requires Mg(2+) as cofactor. Post-translationally, phosphorylated. Phosphorylation upon DNA damage induces relocalization to the nuclear plasma.

Its subcellular location is the nucleus. It localises to the nucleolus. It is found in the nucleoplasm. The protein resides in the mitochondrion. In terms of biological role, structure-specific nuclease with 5'-flap endonuclease and 5'-3' exonuclease activities involved in DNA replication and repair. During DNA replication, cleaves the 5'-overhanging flap structure that is generated by displacement synthesis when DNA polymerase encounters the 5'-end of a downstream Okazaki fragment. It enters the flap from the 5'-end and then tracks to cleave the flap base, leaving a nick for ligation. Also involved in the long patch base excision repair (LP-BER) pathway, by cleaving within the apurinic/apyrimidinic (AP) site-terminated flap. Acts as a genome stabilization factor that prevents flaps from equilibrating into structures that lead to duplications and deletions. Also possesses 5'-3' exonuclease activity on nicked or gapped double-stranded DNA, and exhibits RNase H activity. Also involved in replication and repair of rDNA and in repairing mitochondrial DNA. This Lachancea thermotolerans (strain ATCC 56472 / CBS 6340 / NRRL Y-8284) (Yeast) protein is Flap endonuclease 1.